The primary structure comprises 151 residues: Protein-export protein SecB (151 aa).

The protein belongs to the SecB family. As to quaternary structure, homotetramer, a dimer of dimers. One homotetramer interacts with 1 SecA dimer.

The protein localises to the cytoplasm. In terms of biological role, one of the proteins required for the normal export of preproteins out of the cell cytoplasm. It is a molecular chaperone that binds to a subset of precursor proteins, maintaining them in a translocation-competent state. It also specifically binds to its receptor SecA. The chain is Protein-export protein SecB from Azoarcus sp. (strain BH72).